Consider the following 506-residue polypeptide: Maturase K (506 aa).

This sequence belongs to the intron maturase 2 family. MatK subfamily.

The protein resides in the plastid. It localises to the chloroplast. Usually encoded in the trnK tRNA gene intron. Probably assists in splicing its own and other chloroplast group II introns. The chain is Maturase K from Trifolium willdenovii (Tomcat clover).